The following is a 260-amino-acid chain: Cobalt transport protein CbiM (260 aa).

A signal peptide spans 1-34 (MKLGESMKKNATLSVKIIAFLGVLIFTVMPVANA). The next 6 membrane-spanning stretches (helical) occupy residues 39–59 (EGYL…PFLI), 77–97 (LLFA…LPSF), 109–129 (LSTI…VLLF), 132–152 (LLLA…MAVM), 175–195 (IFFS…IQLG), and 215–235 (VFAI…VLIF).

This sequence belongs to the CbiM family. Forms an energy-coupling factor (ECF) transporter complex composed of an ATP-binding protein (A component, CbiO), a transmembrane protein (T component, CbiQ) and 2 possible substrate-capture proteins (S components, CbiM and CbiN) of unknown stoichimetry.

It is found in the cell membrane. Its pathway is cofactor biosynthesis; adenosylcobalamin biosynthesis. Its function is as follows. Part of the energy-coupling factor (ECF) transporter complex CbiMNOQ involved in cobalt import. This is Cobalt transport protein CbiM from Clostridium cellulovorans (strain ATCC 35296 / DSM 3052 / OCM 3 / 743B).